A 1390-amino-acid chain; its full sequence is DNA-directed RNA polymerase subunit beta' (1390 aa).

Residues cysteine 73, cysteine 75, cysteine 88, and cysteine 91 each coordinate Zn(2+). Residues aspartate 464, aspartate 466, and aspartate 468 each contribute to the Mg(2+) site. Zn(2+)-binding residues include cysteine 810, cysteine 884, cysteine 891, and cysteine 894. Residues glutamate 1365–threonine 1390 form a disordered region.

The protein belongs to the RNA polymerase beta' chain family. In terms of assembly, the RNAP catalytic core consists of 2 alpha, 1 beta, 1 beta' and 1 omega subunit. When a sigma factor is associated with the core the holoenzyme is formed, which can initiate transcription. Mg(2+) serves as cofactor. Zn(2+) is required as a cofactor.

The enzyme catalyses RNA(n) + a ribonucleoside 5'-triphosphate = RNA(n+1) + diphosphate. Its function is as follows. DNA-dependent RNA polymerase catalyzes the transcription of DNA into RNA using the four ribonucleoside triphosphates as substrates. The chain is DNA-directed RNA polymerase subunit beta' from Methylacidiphilum infernorum (isolate V4) (Methylokorus infernorum (strain V4)).